A 245-amino-acid polypeptide reads, in one-letter code: 4-hydroxy-tetrahydrodipicolinate reductase (245 aa).

NAD(+) is bound by residues 7–12 (GAKGKV), D33, 75–77 (GTT), and 102–105 (APNF). The Proton donor/acceptor role is filled by H132. H133 contributes to the (S)-2,3,4,5-tetrahydrodipicolinate binding site. K136 serves as the catalytic Proton donor. 142–143 (GT) provides a ligand contact to (S)-2,3,4,5-tetrahydrodipicolinate.

The protein belongs to the DapB family.

Its subcellular location is the cytoplasm. It catalyses the reaction (S)-2,3,4,5-tetrahydrodipicolinate + NAD(+) + H2O = (2S,4S)-4-hydroxy-2,3,4,5-tetrahydrodipicolinate + NADH + H(+). The catalysed reaction is (S)-2,3,4,5-tetrahydrodipicolinate + NADP(+) + H2O = (2S,4S)-4-hydroxy-2,3,4,5-tetrahydrodipicolinate + NADPH + H(+). Its pathway is amino-acid biosynthesis; L-lysine biosynthesis via DAP pathway; (S)-tetrahydrodipicolinate from L-aspartate: step 4/4. Its function is as follows. Catalyzes the conversion of 4-hydroxy-tetrahydrodipicolinate (HTPA) to tetrahydrodipicolinate. This is 4-hydroxy-tetrahydrodipicolinate reductase from Mycolicibacterium paratuberculosis (strain ATCC BAA-968 / K-10) (Mycobacterium paratuberculosis).